Consider the following 202-residue polypeptide: Snake venom metalloproteinase leucurolysin-A (202 aa).

Pyrrolidone carboxylic acid is present on Gln-1. One can recognise a Peptidase M12B domain in the interval 6-202 (RYIELVVVAD…HNPQCILNKP (197 aa)). The Ca(2+) site is built by Glu-9 and Asp-93. 3 cysteine pairs are disulfide-bonded: Cys-117–Cys-197, Cys-157–Cys-181, and Cys-159–Cys-164. Residue His-142 coordinates Zn(2+). The active site involves Glu-143. Positions 146 and 152 each coordinate Zn(2+). Residues Cys-197 and Asn-200 each coordinate Ca(2+).

This sequence belongs to the venom metalloproteinase (M12B) family. P-I subfamily. In terms of assembly, monomer. The cofactor is Zn(2+). Expressed by the venom gland.

The protein resides in the secreted. Its activity is regulated as follows. Inhibited by EDTA and 2-mercaptoethanol. Inhibited by 1 mM zinc ion and to a lesser extent by 1 mM calcium ion. In terms of biological role, non-hemorrhagic metalloproteinase that hydrolyzes the alpha chains of fibrinogen, as well as fibrin, fibronectin and casein. Beta and gamma chains are also hydrolyzed, but more slowly. Thrombolytic activity is also observed. Induces detachment of endothelial cells followed by death, and inhibits endothelial cell adhesion to fibronectin. Induces edema in mouse paw. Inhibits ADP-induced platelet aggregation on human platelet-rich plasma with an IC(50) of 2.8 uM. The sequence is that of Snake venom metalloproteinase leucurolysin-A from Bothrops leucurus (Whitetail lancehead).